The sequence spans 329 residues: Sex comb on midleg-like protein 1 (329 aa).

Ser138 and Ser238 each carry phosphoserine. Residues Ser138–Pro157 form a disordered region. The 68-residue stretch at Trp258–Lys325 folds into the SAM domain.

This sequence belongs to the SCM family. Ubiquitous. Expressed in fetal and adult tissues.

The protein localises to the nucleus. Putative Polycomb group (PcG) protein. PcG proteins act by forming multiprotein complexes, which are required to maintain the transcriptionally repressive state of homeotic genes throughout development. May be involved in spermatogenesis during sexual maturation. The sequence is that of Sex comb on midleg-like protein 1 (SCML1) from Homo sapiens (Human).